A 337-amino-acid chain; its full sequence is Inositol 2-dehydrogenase 1 (337 aa).

Belongs to the Gfo/Idh/MocA family. In terms of assembly, homotetramer.

It carries out the reaction myo-inositol + NAD(+) = scyllo-inosose + NADH + H(+). Functionally, involved in the oxidation of myo-inositol (MI) to 2-keto-myo-inositol (2KMI or 2-inosose). This chain is Inositol 2-dehydrogenase 1, found in Saccharopolyspora erythraea (strain ATCC 11635 / DSM 40517 / JCM 4748 / NBRC 13426 / NCIMB 8594 / NRRL 2338).